The chain runs to 417 residues: 4-hydroxy-3-methylbut-2-en-1-yl diphosphate synthase (flavodoxin) (417 aa).

The [4Fe-4S] cluster site is built by Cys303, Cys306, Cys349, and Glu356.

This sequence belongs to the IspG family. [4Fe-4S] cluster serves as cofactor.

The enzyme catalyses (2E)-4-hydroxy-3-methylbut-2-enyl diphosphate + oxidized [flavodoxin] + H2O + 2 H(+) = 2-C-methyl-D-erythritol 2,4-cyclic diphosphate + reduced [flavodoxin]. It functions in the pathway isoprenoid biosynthesis; isopentenyl diphosphate biosynthesis via DXP pathway; isopentenyl diphosphate from 1-deoxy-D-xylulose 5-phosphate: step 5/6. In terms of biological role, converts 2C-methyl-D-erythritol 2,4-cyclodiphosphate (ME-2,4cPP) into 1-hydroxy-2-methyl-2-(E)-butenyl 4-diphosphate. The protein is 4-hydroxy-3-methylbut-2-en-1-yl diphosphate synthase (flavodoxin) of Mesorhizobium japonicum (strain LMG 29417 / CECT 9101 / MAFF 303099) (Mesorhizobium loti (strain MAFF 303099)).